We begin with the raw amino-acid sequence, 237 residues long: MDVSVIISSKDPVGQTVKRLGYSFEEIDEDVTEFSYSKGDSIVMICRHESSTRTPAFTIHHPGNPGKSAMGGKPESLAIANARLLTSIFRSMTRIDANIEKIIEATHHGPTEIPKPITFVEIGSDPEMWNNEKLVGKLVEAVLKGIERMEETDCQNTTLIYGGPHYSKLASTVAQSDCISHIISKHYISELSSNVIVQSIERNITRPRTAVLDSIPRSKRETLTSILSSNNISIELR.

This sequence belongs to the DtdA deacylase family. In terms of assembly, monomer. Zn(2+) is required as a cofactor.

It catalyses the reaction a D-aminoacyl-tRNA + H2O = a tRNA + a D-alpha-amino acid + H(+). It carries out the reaction glycyl-tRNA(Ala) + H2O = tRNA(Ala) + glycine + H(+). Functionally, D-aminoacyl-tRNA deacylase with broad substrate specificity. By recycling D-aminoacyl-tRNA to D-amino acids and free tRNA molecules, this enzyme counteracts the toxicity associated with the formation of D-aminoacyl-tRNA entities in vivo. In Metallosphaera sedula (strain ATCC 51363 / DSM 5348 / JCM 9185 / NBRC 15509 / TH2), this protein is D-aminoacyl-tRNA deacylase.